Reading from the N-terminus, the 425-residue chain is Aromatic prenyl transferase PC-22 (425 aa).

L-tryptophan contacts are provided by residues 83 to 84 (GI) and Glu92. Substrate is bound by residues Arg107, Lys198, Tyr200, Arg265, Lys267, Tyr269, Tyr345, Tyr410, and Tyr414.

Belongs to the tryptophan dimethylallyltransferase family. In terms of assembly, homodimer.

It participates in secondary metabolite biosynthesis. Aromatic prenyl transferase; part of the gene cluster that mediates the biosynthesis of the indole diterpenes penitrems. The geranylgeranyl diphosphate (GGPP) synthase penG catalyzes the first step in penitrem biosynthesis via conversion of farnesyl pyrophosphate and isopentyl pyrophosphate into geranylgeranyl pyrophosphate (GGPP). Condensation of indole-3-glycerol phosphate with GGPP by the prenyl transferase penC then forms 3-geranylgeranylindole (3-GGI). Epoxidation by the FAD-dependent monooxygenase penM leads to a epoxidized-GGI that is substrate of the terpene cyclase penB for cyclization to yield paspaline. Paspaline is subsequently converted to 13-desoxypaxilline by the cytochrome P450 monooxygenase penP, the latter being then converted to paxilline by the cytochrome P450 monooxygenase penQ. Paxilline is converted to beta-paxitriol via C-10 ketoreduction by the short-chain dehydrogenase PC-15 which can be monoprenylated at the C-20 by the indole diterpene prenyltransferase penD. A two-step elimination (acetylation and elimination) process performed by the O-acetyltransferase PC-16 and the P.simplicissimum ptmI-ortholog not yet identified in P.crustosum, leads to the production of the prenylated form of penijanthine. The FAD-linked oxidoreductase ptmO then converts the prenylated form of penijanthine into PC-M5 which is in turn transformed into PC-M4 by the aromatic dimethylallyltransferase PC-22. A series of oxidation steps involving 4 cytochrome P450 monooxygenases (PC-21, PC-05, PC-23, PC-20) and a FAD-dependent monooxygenase (PC-14) are required for the transformation of PC-M4 to penitrems A and E. Synthesis of these final products is proposed to proceed via penitrems D and C (PC-21, PC-05, PC-14) and penitrems B and F (PC-21, PC-05, PC-14, PC-23). This Penicillium crustosum (Blue mold fungus) protein is Aromatic prenyl transferase PC-22.